The sequence spans 93 residues: Small ribosomal subunit protein uS19 (93 aa).

The protein belongs to the universal ribosomal protein uS19 family.

Functionally, protein S19 forms a complex with S13 that binds strongly to the 16S ribosomal RNA. The sequence is that of Small ribosomal subunit protein uS19 from Lactobacillus helveticus (strain DPC 4571).